Here is a 513-residue protein sequence, read N- to C-terminus: ATP synthase subunit alpha (513 aa).

169-176 (GDRQTGKT) is an ATP binding site.

Belongs to the ATPase alpha/beta chains family. F-type ATPases have 2 components, CF(1) - the catalytic core - and CF(0) - the membrane proton channel. CF(1) has five subunits: alpha(3), beta(3), gamma(1), delta(1), epsilon(1). CF(0) has three main subunits: a(1), b(2) and c(9-12). The alpha and beta chains form an alternating ring which encloses part of the gamma chain. CF(1) is attached to CF(0) by a central stalk formed by the gamma and epsilon chains, while a peripheral stalk is formed by the delta and b chains.

The protein resides in the cell inner membrane. The enzyme catalyses ATP + H2O + 4 H(+)(in) = ADP + phosphate + 5 H(+)(out). Its function is as follows. Produces ATP from ADP in the presence of a proton gradient across the membrane. The alpha chain is a regulatory subunit. This Dichelobacter nodosus (strain VCS1703A) protein is ATP synthase subunit alpha.